The sequence spans 874 residues: Alanine--tRNA ligase (874 aa).

The Zn(2+) site is built by His-562, His-566, Cys-665, and His-669.

It belongs to the class-II aminoacyl-tRNA synthetase family. Zn(2+) is required as a cofactor.

Its subcellular location is the cytoplasm. It carries out the reaction tRNA(Ala) + L-alanine + ATP = L-alanyl-tRNA(Ala) + AMP + diphosphate. Catalyzes the attachment of alanine to tRNA(Ala) in a two-step reaction: alanine is first activated by ATP to form Ala-AMP and then transferred to the acceptor end of tRNA(Ala). Also edits incorrectly charged Ser-tRNA(Ala) and Gly-tRNA(Ala) via its editing domain. The protein is Alanine--tRNA ligase of Pseudomonas fluorescens (strain Pf0-1).